The sequence spans 284 residues: GTP cyclohydrolase MptA (284 aa).

It belongs to the GTP cyclohydrolase IV family. As to quaternary structure, homodimer. The cofactor is Fe(2+).

It carries out the reaction GTP + H2O = 7,8-dihydroneopterin 2',3'-cyclic phosphate + formate + diphosphate + H(+). It functions in the pathway cofactor biosynthesis; 5,6,7,8-tetrahydromethanopterin biosynthesis. In terms of biological role, converts GTP to 7,8-dihydro-D-neopterin 2',3'-cyclic phosphate, the first intermediate in the biosynthesis of coenzyme methanopterin. The sequence is that of GTP cyclohydrolase MptA from Thermoplasma volcanium (strain ATCC 51530 / DSM 4299 / JCM 9571 / NBRC 15438 / GSS1).